The chain runs to 309 residues: 4-hydroxy-3-methylbut-2-enyl diphosphate reductase (309 aa).

Cys12 serves as a coordination point for [4Fe-4S] cluster. 2 residues coordinate (2E)-4-hydroxy-3-methylbut-2-enyl diphosphate: His41 and His74. Dimethylallyl diphosphate is bound by residues His41 and His74. His41 and His74 together coordinate isopentenyl diphosphate. Cys96 is a [4Fe-4S] cluster binding site. Residue His124 participates in (2E)-4-hydroxy-3-methylbut-2-enyl diphosphate binding. His124 provides a ligand contact to dimethylallyl diphosphate. His124 contributes to the isopentenyl diphosphate binding site. The active-site Proton donor is Glu126. A (2E)-4-hydroxy-3-methylbut-2-enyl diphosphate-binding site is contributed by Thr167. Cys197 contributes to the [4Fe-4S] cluster binding site. (2E)-4-hydroxy-3-methylbut-2-enyl diphosphate contacts are provided by Ser225, Ser226, Asn227, and Ser269. 4 residues coordinate dimethylallyl diphosphate: Ser225, Ser226, Asn227, and Ser269. Isopentenyl diphosphate contacts are provided by Ser225, Ser226, Asn227, and Ser269.

It belongs to the IspH family. It depends on [4Fe-4S] cluster as a cofactor.

It carries out the reaction isopentenyl diphosphate + 2 oxidized [2Fe-2S]-[ferredoxin] + H2O = (2E)-4-hydroxy-3-methylbut-2-enyl diphosphate + 2 reduced [2Fe-2S]-[ferredoxin] + 2 H(+). The catalysed reaction is dimethylallyl diphosphate + 2 oxidized [2Fe-2S]-[ferredoxin] + H2O = (2E)-4-hydroxy-3-methylbut-2-enyl diphosphate + 2 reduced [2Fe-2S]-[ferredoxin] + 2 H(+). The protein operates within isoprenoid biosynthesis; dimethylallyl diphosphate biosynthesis; dimethylallyl diphosphate from (2E)-4-hydroxy-3-methylbutenyl diphosphate: step 1/1. It functions in the pathway isoprenoid biosynthesis; isopentenyl diphosphate biosynthesis via DXP pathway; isopentenyl diphosphate from 1-deoxy-D-xylulose 5-phosphate: step 6/6. Catalyzes the conversion of 1-hydroxy-2-methyl-2-(E)-butenyl 4-diphosphate (HMBPP) into a mixture of isopentenyl diphosphate (IPP) and dimethylallyl diphosphate (DMAPP). Acts in the terminal step of the DOXP/MEP pathway for isoprenoid precursor biosynthesis. The polypeptide is 4-hydroxy-3-methylbut-2-enyl diphosphate reductase (Pseudoalteromonas translucida (strain TAC 125)).